The following is a 493-amino-acid chain: Probable UTP--glucose-1-phosphate uridylyltransferase (493 aa).

Residues 105–108, Q181, G211, and D242 contribute to the UTP site; that span reads LTGK. 107-108 contacts substrate; that stretch reads GK. A substrate-binding site is contributed by 240–242; the sequence is NVD.

This sequence belongs to the UDPGP type 1 family.

The catalysed reaction is alpha-D-glucose 1-phosphate + UTP + H(+) = UDP-alpha-D-glucose + diphosphate. Functionally, plays a central role as a glucosyl donor in cellular metabolic pathways. This Saccharomyces cerevisiae (strain ATCC 204508 / S288c) (Baker's yeast) protein is Probable UTP--glucose-1-phosphate uridylyltransferase.